We begin with the raw amino-acid sequence, 433 residues long: Trigger factor (433 aa).

The region spanning 163 to 248 (GDVVVLDFAA…VHAVKERRLP (86 aa)) is the PPIase FKBP-type domain.

This sequence belongs to the FKBP-type PPIase family. Tig subfamily.

The protein localises to the cytoplasm. The catalysed reaction is [protein]-peptidylproline (omega=180) = [protein]-peptidylproline (omega=0). Its function is as follows. Involved in protein export. Acts as a chaperone by maintaining the newly synthesized protein in an open conformation. Functions as a peptidyl-prolyl cis-trans isomerase. This chain is Trigger factor, found in Nitratidesulfovibrio vulgaris (strain ATCC 29579 / DSM 644 / CCUG 34227 / NCIMB 8303 / VKM B-1760 / Hildenborough) (Desulfovibrio vulgaris).